The chain runs to 428 residues: 26S proteasome regulatory subunit 7 (428 aa).

211–218 (GPPGTGKT) contacts ATP.

It belongs to the AAA ATPase family.

It localises to the cytoplasm. The protein localises to the nucleus. Functionally, the 26S proteasome is involved in the ATP-dependent degradation of ubiquitinated proteins. The regulatory (or ATPase) complex confers ATP dependency and substrate specificity to the 26S complex. This is 26S proteasome regulatory subunit 7 (psmC2) from Dictyostelium discoideum (Social amoeba).